A 510-amino-acid polypeptide reads, in one-letter code: Anaerobic nitric oxide reductase transcription regulator NorR (510 aa).

Residues 188-417 (IIGNSQGMRT…LEHVIKRAAV (230 aa)) form the Sigma-54 factor interaction domain. Residues 216–223 (GETGVGKE) and 279–288 (ADGGTLFLDE) each bind ATP. Positions 486–505 (WAATARQLELDSGNLHRLAK) form a DNA-binding region, H-T-H motif.

Its pathway is nitrogen metabolism; nitric oxide reduction. Functionally, required for the expression of anaerobic nitric oxide (NO) reductase, acts as a transcriptional activator for at least the norVW operon. Activation also requires sigma-54. The polypeptide is Anaerobic nitric oxide reductase transcription regulator NorR (Vibrio vulnificus (strain YJ016)).